We begin with the raw amino-acid sequence, 138 residues long: Acidic phospholipase A2 1 (138 aa).

Positions M1–G16 are cleaved as a signal peptide. 7 disulfide bridges follow: C42/C131, C44/C60, C59/C111, C65/C138, C66/C104, C73/C97, and C91/C102. Residues F43, G45, and G47 each contribute to the Ca(2+) site. The active site involves H63. D64 provides a ligand contact to Ca(2+). Residue D105 is part of the active site.

Belongs to the phospholipase A2 family. Group II subfamily. D49 sub-subfamily. Requires Ca(2+) as cofactor. As to expression, expressed by the venom gland.

It is found in the secreted. The enzyme catalyses a 1,2-diacyl-sn-glycero-3-phosphocholine + H2O = a 1-acyl-sn-glycero-3-phosphocholine + a fatty acid + H(+). Its function is as follows. Snake venom phospholipase A2 (PLA2) that has high lipolytic activity. PLA2 catalyzes the calcium-dependent hydrolysis of the 2-acyl groups in 3-sn-phosphoglycerides. The polypeptide is Acidic phospholipase A2 1 (Craspedocephalus gramineus (Bamboo pit viper)).